The chain runs to 441 residues: MDTDILKMQDREVFEAIALETGRQMETLELIASENFTSRAVMQACGSVMTNKYAEGYPGKRYYGGCEFVDIAENLARDRAKKLFGCEYVNVQPHSGSSANMAVLFSVLKPGDCIMGLDLSHGGHLTHGSSVNFSGQMYKAHAYGVDGETGIIDMNQVEKMALEVRPRLIICGASAYSQGFDFKAFREIADKVGAFLMADIAHPAGLIVSGLLSDPMPHCHFVTTTTHKTLRGPRGGMIMMGKDFENPMGITIKTKNGQRVKMMSEVMDAEVMPGIQGGPLMHIIAGKAVAFGEALRPEFRQYAMQVRSNAAAMSERFLSLGYNIVSGGTKNHLMLLDLRNKDITGKVVENTLHEAGITVNKNMVPFDDKSPFVTSGIRIGTAAMTTRGMNEDDSRLIAELIDRVILSAASPESSSVCRSVKEEIRSLCLRNPLEGYGVTPS.

Residues Leu119 and 123–125 (GHL) contribute to the (6S)-5,6,7,8-tetrahydrofolate site. Lys228 is subject to N6-(pyridoxal phosphate)lysine. 370–372 (SPF) provides a ligand contact to (6S)-5,6,7,8-tetrahydrofolate.

The protein belongs to the SHMT family. Homodimer. Pyridoxal 5'-phosphate serves as cofactor.

The protein localises to the cytoplasm. The catalysed reaction is (6R)-5,10-methylene-5,6,7,8-tetrahydrofolate + glycine + H2O = (6S)-5,6,7,8-tetrahydrofolate + L-serine. The protein operates within one-carbon metabolism; tetrahydrofolate interconversion. Its pathway is amino-acid biosynthesis; glycine biosynthesis; glycine from L-serine: step 1/1. In terms of biological role, catalyzes the reversible interconversion of serine and glycine with tetrahydrofolate (THF) serving as the one-carbon carrier. This reaction serves as the major source of one-carbon groups required for the biosynthesis of purines, thymidylate, methionine, and other important biomolecules. Also exhibits THF-independent aldolase activity toward beta-hydroxyamino acids, producing glycine and aldehydes, via a retro-aldol mechanism. The chain is Serine hydroxymethyltransferase from Chlorobium phaeovibrioides (strain DSM 265 / 1930) (Prosthecochloris vibrioformis (strain DSM 265)).